Consider the following 631-residue polypeptide: MAEAPQPPPPLVEIDPDFEPFSRPRSCTWPLPRPEFNPSSSANSSPAPSLQPEPAAGNVDFLSNLSLLEESEDFDPAEALGVCGDFPCQDIRQLQPPIPQQQQQHSQQQQEALTLLAPSVPSALSPASSPSPLGAQQPRKSSSSRRNAWGNLSYADLISQAIESSPEKRLTLSQIYDWMVKSVPYFKDKGDSNSSAGWKNSIRHNLSLHSKFVRVQNEGTGKSSWWILNPEGGKNGKSPRRRAASMDNNSKFAKSRGRAAKKKASMQSSQDGSSDSPGSQFSKWPGSPSSQSNDDFEAWSTFRPRTSSNASTISGRLSPIMPEQDDLGDADVHNLVYPSSATKLTSTLPSLSEMGNSENMENLLDNLNLLTPNSSTQSSPASMMQQSGYLFTSPNTSLGSPNSEYRKYSYAQTGISPISQMPMQTVPENKSGYRAVGQYPVPAGLLKELLTSDSPPHNDILTPVDPAVSQANNRVLGQNSLIGSNSIMPAYGSQPAPNKMSSHPHLHQPNHPTSINGRPIAHNPGINRLSTVKTSVQVPMPHQPIQMTSMGSYSMNSCNGYGRVGIVSIHQEILPSDLDDMLIESLDCDVESIIRNDLMEDGEADFNFDSILPNQSFPHSVTTTTHSWVSG.

The span at 1 to 11 (MAEAPQPPPPL) shows a compositional bias: pro residues. Disordered stretches follow at residues 1–57 (MAEA…PAAG), 90–147 (DIRQ…SRRN), 223–324 (SSWW…MPEQ), and 372–404 (PNSS…PNSE). Low complexity-rich tracts occupy residues 37-48 (NPSSSANSSPAP) and 100-135 (QQQQ…PLGA). Residues 149-243 (WGNLSYADLI…KNGKSPRRRA (95 aa)) constitute a DNA-binding region (fork-head). Over residues 253–264 (AKSRGRAAKKKA) the composition is skewed to basic residues. Over residues 265–282 (SMQSSQDGSSDSPGSQFS) the composition is skewed to low complexity. 2 stretches are compositionally biased toward polar residues: residues 303–315 (RPRT…TISG) and 381–403 (ASMM…SPNS).

Post-translationally, phosphorylated by AKT1; insulin-induced. In terms of processing, IGF1 rapidly induces phosphorylation of Thr-28, Ser-245 and Ser-308. Phosphorylation of Ser-245 decreases DNA-binding activity and promotes the phosphorylation of Thr-28, and Ser-308, which leads to nuclear exclusion and loss of function. Phosphorylation of Ser-318 is independent of IGF1 and leads to reduced function. In terms of tissue distribution, localized to the animal hemisphere during early cleavage stages. At early tadpole stages, expressed in the branchial arches, pronephros and liver. Within the head, expressed in the forming thyroid gland and in head mesenchyme anterior to the eyes.

The protein resides in the cytoplasm. It localises to the nucleus. In terms of biological role, transcription factor that regulates metabolic homeostasis in response to oxidative stress. Binds to the consensus sequence 5'-TT[G/A]TTTTG-3' and the related Daf-16 family binding element (DBE) with consensus sequence 5'-TT[G/A]TTTAC-3'. Main regulator of redox balance and osteoblast numbers and controls bone mass. Orchestrates the endocrine function of the skeleton in regulating glucose metabolism. Also acts as a key regulator of chondrogenic commitment of skeletal progenitor cells in response to lipid availability: when lipids levels are low, translocates to the nucleus and promotes expression of sox9, which induces chondrogenic commitment and suppresses fatty acid oxidation. Acts synergistically with atf4 to suppress osteocalcin/bglap activity, increasing glucose levels and triggering glucose intolerance and insulin insensitivity. Also suppresses the transcriptional activity of runx2, an upstream activator of osteocalcin/bglap. May act as a positive regulator of apoptosis in cardiac smooth muscle cells as a result of its transcriptional activation of pro-apoptotic genes. The protein is Forkhead box protein O1 of Xenopus laevis (African clawed frog).